The following is a 61-amino-acid chain: Cytotoxin homolog 2 (61 aa).

Disulfide bonds link Cys3-Cys22, Cys15-Cys39, Cys43-Cys54, and Cys55-Cys60.

The protein belongs to the three-finger toxin family. Short-chain subfamily. Orphan group XV sub-subfamily. As to expression, expressed by the venom gland.

The protein resides in the secreted. It localises to the target cell membrane. In terms of biological role, has low cytotoxic activity. The protein is Cytotoxin homolog 2 of Naja melanoleuca (Forest cobra).